We begin with the raw amino-acid sequence, 429 residues long: Ribosomal RNA small subunit methyltransferase B (429 aa).

S-adenosyl-L-methionine-binding positions include 254 to 260, aspartate 277, aspartate 303, and aspartate 322; that span reads CAAPGGK. The active-site Nucleophile is the cysteine 375. The segment at 397–419 is disordered; the sequence is ALSETGTPDQPGQQNLPGGEEGD. The span at 400–412 shows a compositional bias: polar residues; that stretch reads ETGTPDQPGQQNL.

This sequence belongs to the class I-like SAM-binding methyltransferase superfamily. RsmB/NOP family.

The protein resides in the cytoplasm. It carries out the reaction cytidine(967) in 16S rRNA + S-adenosyl-L-methionine = 5-methylcytidine(967) in 16S rRNA + S-adenosyl-L-homocysteine + H(+). Specifically methylates the cytosine at position 967 (m5C967) of 16S rRNA. This Salmonella newport (strain SL254) protein is Ribosomal RNA small subunit methyltransferase B.